Consider the following 429-residue polypeptide: MKKVLAIILGGGAGTRLYPLTKQRAKPAVPLAGKYRLIDIPVSNCINSEITHVYVLTQFNSASLNRHIARTYNFSGFSDGFVEVLAAQQTPENPDWFQGTADAVRQYLWLLSDWEVDYYLILSGDHLYRMDYRLFVNRHRDTNADITLSVLPVEEQVASSFGLLQVDHSGRVTAFSEKPQGEALTRMRVDTTDFGLTPAEAAHKPYLASMGIYVFNRQVLIDLLKQSPQSTDFGKEIIPMAATDHNVQTYLFNDYWEDIGTISSFYEANLALTRQPQPPFSFYDEKAPIYTRPRYLPPSKLLDCQVTESIIGEGCILKNCQIQHSVLGVRSRIESGCVIDNALLMGADFYQPFAERDHKIKNNSVPLGIGADTIVRRAIVDKNACIGRNVKIVNKDHVEEANRESEGFYIRNGIVVVLKNAVIPDNTVI.

Alpha-D-glucose 1-phosphate-binding positions include G162, 177-178, and S209; that span reads EK.

The protein belongs to the bacterial/plant glucose-1-phosphate adenylyltransferase family. In terms of assembly, homotetramer.

It catalyses the reaction alpha-D-glucose 1-phosphate + ATP + H(+) = ADP-alpha-D-glucose + diphosphate. The protein operates within glycan biosynthesis; glycogen biosynthesis. In terms of biological role, involved in the biosynthesis of ADP-glucose, a building block required for the elongation reactions to produce glycogen. Catalyzes the reaction between ATP and alpha-D-glucose 1-phosphate (G1P) to produce pyrophosphate and ADP-Glc. The sequence is that of Glucose-1-phosphate adenylyltransferase from Cyanothece sp. (strain PCC 7425 / ATCC 29141).